Consider the following 432-residue polypeptide: Septin-14 (432 aa).

Residues 49–315 (QGFTFNILCV…ECYRYQKLQK (267 aa)) form the Septin-type G domain. The segment at 59–66 (GETGIGKS) is G1 motif. GTP-binding positions include 59-66 (GETGIGKS), G114, 195-203 (KADTISKND), G249, and R264. A G3 motif region spans residues 111-114 (ETVG). Positions 194–197 (AKAD) are G4 motif. Positions 332-412 (EIFEAKRQEF…IIDFYKMKAA (81 aa)) form a coiled coil. Positions 369 to 432 (EAEKELQDKF…DTKKDKHRKK (64 aa)) are required for interaction with SEPTIN4. Required for migration of cortical neurons during corticogenesis.

This sequence belongs to the TRAFAC class TrmE-Era-EngA-EngB-Septin-like GTPase superfamily. Septin GTPase family. In terms of assembly, septins polymerize into heterooligomeric protein complexes that form filaments, and can associate with cellular membranes, actin filaments and microtubules. GTPase activity is required for filament formation. Interacts with ACTN4. Interacts with SEPTIN9. Interacts (via C-terminus) with SEPTIN4. In terms of tissue distribution, testis-specific (at protein level).

The protein resides in the cytoplasm. The protein localises to the cytoskeleton. It is found in the cell projection. It localises to the axon. Its subcellular location is the dendrite. The protein resides in the perikaryon. The protein localises to the perinuclear region. It is found in the cytoplasmic vesicle. It localises to the secretory vesicle. Its subcellular location is the acrosome. Functionally, filament-forming cytoskeletal GTPase. Involved in the migration of cortical neurons and the formation of neuron leading processes during embryonic development. Plays a role in sperm head formation during spermiogenesis, potentially via facilitating localization of ACTN4 to cell filaments. The sequence is that of Septin-14 from Homo sapiens (Human).